The chain runs to 1129 residues: SMC5-SMC6 complex localization factor protein 2 (1129 aa).

3 disordered regions span residues 71–178, 312–343, and 955–1057; these read VKAR…SILN, NTSS…TEQA, and MLYD…QLEG. The span at 72 to 87 shows a compositional bias: basic residues; it reads KARRHTLPHSSHRRSP. Residues 93–110 show a composition bias toward polar residues; sequence LLFQQRPRNSSGQFTHNP. 2 stretches are compositionally biased toward basic and acidic residues: residues 112–130 and 149–166; these read QKKD…KKEL and RKSE…RPRV. Polar residues-rich tracts occupy residues 169–178 and 324–343; these read QATSSSSILN and TGRS…TEQA. 2 stretches are compositionally biased toward acidic residues: residues 999–1014 and 1033–1048; these read ESEE…EEDW and SAED…EEES.

This sequence belongs to the FAM178 family.

The protein localises to the nucleus. Plays a role in the DNA damage response (DDR) pathway by regulating postreplication repair of UV-damaged DNA and genomic stability maintenance. Promotes the recruitment of the SMC5-SMC6 complex to DNA lesions. In Danio rerio (Zebrafish), this protein is SMC5-SMC6 complex localization factor protein 2 (slf2).